The primary structure comprises 199 residues: Potassium-transporting ATPase KdpC subunit (199 aa).

Residues 21–43 (LALLFVCGVVYTGTVTQLGGALF) traverse the membrane as a helical segment.

Belongs to the KdpC family. As to quaternary structure, the system is composed of three essential subunits: KdpA, KdpB and KdpC.

The protein localises to the cell inner membrane. Its function is as follows. Part of the high-affinity ATP-driven potassium transport (or Kdp) system, which catalyzes the hydrolysis of ATP coupled with the electrogenic transport of potassium into the cytoplasm. This subunit acts as a catalytic chaperone that increases the ATP-binding affinity of the ATP-hydrolyzing subunit KdpB by the formation of a transient KdpB/KdpC/ATP ternary complex. The polypeptide is Potassium-transporting ATPase KdpC subunit (Shewanella putrefaciens (strain CN-32 / ATCC BAA-453)).